The following is a 491-amino-acid chain: Probable polygalacturonase (491 aa).

The helical transmembrane segment at 15–35 threads the bilayer; it reads PIVSFYCFQVVSVLVAVVLLL. N-linked (GlcNAc...) asparagine glycosylation is found at asparagine 165, asparagine 175, and asparagine 214. PbH1 repeat units lie at residues 230–256, 257–278, 319–340, and 348–369; these read SRNI…NPDS, CTNT…AVKS, IQDV…RIKT, and VKDI…WMTG. Aspartate 271 functions as the Proton donor in the catalytic mechanism. N-linked (GlcNAc...) asparagine glycosylation is found at asparagine 399 and asparagine 421.

It belongs to the glycosyl hydrolase 28 family.

The protein resides in the membrane. The enzyme catalyses (1,4-alpha-D-galacturonosyl)n+m + H2O = (1,4-alpha-D-galacturonosyl)n + (1,4-alpha-D-galacturonosyl)m.. The sequence is that of Probable polygalacturonase from Vitis vinifera (Grape).